The following is a 107-amino-acid chain: Nucleoid-associated protein BMEA_A0033 (107 aa).

It belongs to the YbaB/EbfC family. As to quaternary structure, homodimer.

Its subcellular location is the cytoplasm. It localises to the nucleoid. In terms of biological role, binds to DNA and alters its conformation. May be involved in regulation of gene expression, nucleoid organization and DNA protection. The chain is Nucleoid-associated protein BMEA_A0033 from Brucella melitensis biotype 2 (strain ATCC 23457).